The sequence spans 318 residues: S-adenosylmethionine/S-adenosylhomocysteine transporter (318 aa).

Helical transmembrane passes span 7–27 (FANL…AFIW), 44–64 (LFVT…LLLF), 76–96 (VMPI…LEFI), 105–125 (KACF…YVQL), 134–154 (LGGL…GGGE), 163–183 (LGMP…GWTL), 193–213 (SLSI…LSLA), 231–251 (LFLQ…YNLF), 262–282 (FLSF…WLLL), and 285–305 (SFPP…RLIY). Positions 25 to 148 (FIWSSSFALS…LGLVSYLVYL (124 aa)) constitute an EamA 1 domain. Residues 191-304 (CESLSITAIN…GFMVLGCRLI (114 aa)) enclose the EamA 2 domain.

This sequence belongs to the drug/metabolite transporter (DMT) superfamily. 10 TMS drug/metabolite exporter (DME) (TC 2.A.7.3) family.

It is found in the cell membrane. Functionally, transports S-adenosylmethionine (SAM) and S-adenosylhomocysteine (SAH). Allows bacteria to acquire SAM from the eukaryotic host cell and to likely remove the toxic by-product SAH. This Chlamydia muridarum (strain MoPn / Nigg) protein is S-adenosylmethionine/S-adenosylhomocysteine transporter.